The following is a 426-amino-acid chain: DNA polymerase processivity factor component OPG148 (426 aa).

This sequence belongs to the orthopoxvirus OPG148 family. Interacts with the DNA polymerase catalytic subunit OPG071. Interacts with UDG/OPG116. Component of the uracil-DNA glycosylase(UDG)-OPG148-polymerase complex; OPG148 and UDG form a heterodimeric processivity factor that associates with OPG071 to form the processive polymerase holoenzyme. Interacts with OPG117.

In terms of biological role, plays an essential role in viral DNA replication by acting as the polymerase processivity factor together with protein OPG116. Serves as a bridge which links the DNA polymerase OPG071 and the uracil DNA glycosylase. The polypeptide is DNA polymerase processivity factor component OPG148 (OPG148) (Variola virus (isolate Human/India/Ind3/1967) (VARV)).